A 350-amino-acid polypeptide reads, in one-letter code: Ribosomal RNA small subunit methyltransferase C (350 aa).

Belongs to the methyltransferase superfamily. RsmC family. As to quaternary structure, monomer.

It localises to the cytoplasm. The catalysed reaction is guanosine(1207) in 16S rRNA + S-adenosyl-L-methionine = N(2)-methylguanosine(1207) in 16S rRNA + S-adenosyl-L-homocysteine + H(+). Functionally, specifically methylates the guanine in position 1207 of 16S rRNA in the 30S particle. The polypeptide is Ribosomal RNA small subunit methyltransferase C (Sodalis glossinidius (strain morsitans)).